The sequence spans 489 residues: MEMEMSVLAMSSTLILALAMALIFLFKAKSSSAIKWPPGPKTLPIIGNLHQLGGDELHIVLAKLARVHGAIMTIWMAKKPVIVVSDVNSVWEVLVSKSSDYAARDAAEISKIVSASSHSINTSDSGPYWQTLRRGLTHGPLGPLNISAQIPIQQRDMQRVIREMQQDAAANGGIIKPLDHLKRSSTRLVSRLIFGDTFDNDPYNDSMHEVVQDLNRFGGIALLEQAFSFAKHLPSYKRGVKEFHIHKRKIDDLVRPVVASANPPSNSYLGFLQSQNYSEEIIIACIFELYLLAMDSSASTATWALAFMIRDQQVQEKLYQDIKRVIGDGVDLVKAEDLSKMHYLQAVVKETMRMKPIAPLAIPHKTAIDTTVMGTKVPKGTCVMVNLYALHHDESVWAKPYTFMPERFLQGEDGKSVTEQAFLPFGAGMRICGGMEVGKLQFSLALANLVNAFKWTSAAEGKLPDMSDELQFITVMKTPLEARIIPRNP.

A helical transmembrane segment spans residues 6–26 (SVLAMSSTLILALAMALIFLF). Residue cysteine 432 participates in heme binding.

Belongs to the cytochrome P450 family. Heme serves as cofactor. Expressed in leaves, rhizomes and stems.

It localises to the membrane. It carries out the reaction (-)-matairesinol + reduced [NADPH--hemoprotein reductase] + O2 = (-)-pluviatolide + oxidized [NADPH--hemoprotein reductase] + 2 H2O + H(+). It participates in aromatic compound metabolism; phenylpropanoid biosynthesis. Its function is as follows. Cytochrome P450 involved in the biosynthesis of etoposide, a chemotherapeutic compound of the topoisomerase inhibitor family. Catalyzes the conversion of matairesinol to pluviatolide. The sequence is that of Pluviatolide synthase from Sinopodophyllum hexandrum (Himalayan may apple).